The sequence spans 268 residues: MERYESLFAQLKERKEGAFVPFVTLGDPGIEQSLKIIDTLIEAGADALELGIPFSDPLADGPTIQNATLRAFAAGVTPAQCFEMLALIRQKHPTIPIGLLMYANLVFNKGIDEFYAQCEKVGVDSVLVADVPIEESAPFRQAALRHNVAPIFICPPNADDDLLRQIASYGRGYTYLLSRAGVTGAENRAALPLNHLVAKLKEYNAAPPLQGFGISAPDQVKAAIDAGAAGAISGSAIVKIIEQHINEPEKMLAALKVFVQPMKAATRS.

Active-site proton acceptor residues include E49 and D60.

The protein belongs to the TrpA family. As to quaternary structure, tetramer of two alpha and two beta chains.

It catalyses the reaction (1S,2R)-1-C-(indol-3-yl)glycerol 3-phosphate + L-serine = D-glyceraldehyde 3-phosphate + L-tryptophan + H2O. Its pathway is amino-acid biosynthesis; L-tryptophan biosynthesis; L-tryptophan from chorismate: step 5/5. Functionally, the alpha subunit is responsible for the aldol cleavage of indoleglycerol phosphate to indole and glyceraldehyde 3-phosphate. The chain is Tryptophan synthase alpha chain from Escherichia coli (strain SE11).